Reading from the N-terminus, the 431-residue chain is IMP-specific 5'-nucleotidase 1 (431 aa).

K117 provides a ligand contact to ATP. Residue D157 is the Nucleophile of the active site. IMP is bound by residues D157, D159, D165, T193, D349, and K357. 2 residues coordinate Mg(2+): D157 and D159. The active-site Proton donor is D159. Residue D388 coordinates Mg(2+).

The protein belongs to the ISN1 family. In terms of assembly, homotetramer. Mg(2+) serves as cofactor.

The catalysed reaction is IMP + H2O = inosine + phosphate. With respect to regulation, allosterically activated by ATP. ATP binding is a prerequisite to magnesium and substrate binding. ATP binds to 2 of the subunits in the homotetramer inducing a closure of these 2 subunits and the release of the C-terminal loop, thereby activating the enzyme. Functionally, IMP-specific 5'-nucleotidase involved in IMP (inositol monophosphate) degradation. The polypeptide is IMP-specific 5'-nucleotidase 1 (isn-1) (Neurospora crassa (strain ATCC 24698 / 74-OR23-1A / CBS 708.71 / DSM 1257 / FGSC 987)).